We begin with the raw amino-acid sequence, 211 residues long: Probable transcriptional regulatory protein SgaR (211 aa).

The Response regulatory domain maps to 10-126 (EVSIVDQNPV…VLLEAVVSVA (117 aa)). Aspartate 15 is modified (4-aspartylphosphate). Residues 141–206 (NHDPLESLTA…MAVALHVSIN (66 aa)) form the HTH luxR-type domain. Positions 165–184 (NLQIAARTGISRNTVKYHLK) form a DNA-binding region, H-T-H motif.

Its function is as follows. Not known. Could act on the sgaA gene expression. The polypeptide is Probable transcriptional regulatory protein SgaR (sgaR) (Hyphomicrobium methylovorum).